The following is an 877-amino-acid chain: Probable sulfate permease C3H7.02 (877 aa).

The next 13 membrane-spanning stretches (helical) occupy residues 133-153 (WLVY…PQGM), 161-181 (LPAQ…CIFA), 186-206 (VSIG…ANVQ), 221-241 (LALL…GFII), 243-263 (FIPV…IMAG), 292-312 (LPHT…LYLV), 329-349 (VFFL…TAIS), 384-404 (LCAD…LEHI), 424-444 (LIAM…PATG), 461-481 (LGGI…TGAF), 484-504 (IPNA…IIPW), 518-538 (ALIF…NGIY), and 543-563 (LSAA…LGIL). Residues 594–747 (NLTVRDPPAG…SRSIEVGSAA (154 aa)) form the STAS domain. 2 disordered regions span residues 643-663 (KASD…APEV) and 793-821 (ADSD…TFSH). Residues 801–821 (SDDKDKKVEGHRPSQDPTFSH) are compositionally biased toward basic and acidic residues.

This sequence belongs to the SLC26A/SulP transporter (TC 2.A.53) family.

Its subcellular location is the membrane. Functionally, high affinity uptake of sulfate into the cell. In Schizosaccharomyces pombe (strain 972 / ATCC 24843) (Fission yeast), this protein is Probable sulfate permease C3H7.02.